The chain runs to 291 residues: Porphobilinogen deaminase (291 aa).

Cys238 is subject to S-(dipyrrolylmethanemethyl)cysteine.

The protein belongs to the HMBS family. In terms of assembly, monomer. It depends on dipyrromethane as a cofactor.

It carries out the reaction 4 porphobilinogen + H2O = hydroxymethylbilane + 4 NH4(+). The protein operates within porphyrin-containing compound metabolism; protoporphyrin-IX biosynthesis; coproporphyrinogen-III from 5-aminolevulinate: step 2/4. In terms of biological role, tetrapolymerization of the monopyrrole PBG into the hydroxymethylbilane pre-uroporphyrinogen in several discrete steps. The sequence is that of Porphobilinogen deaminase from Clostridium beijerinckii (strain ATCC 51743 / NCIMB 8052) (Clostridium acetobutylicum).